A 195-amino-acid chain; its full sequence is Putative CheY-P phosphatase CheC1 (195 aa).

Belongs to the CheC family.

Catalyzes the dephosphorylation of CheY-P. This chain is Putative CheY-P phosphatase CheC1 (cheC1), found in Halobacterium salinarum (strain ATCC 29341 / DSM 671 / R1).